A 275-amino-acid polypeptide reads, in one-letter code: Large ribosomal subunit protein uL2cz/uL2cy (275 aa).

Disordered stretches follow at residues 1–26 (MAIH…VKSN) and 224–275 (MNPV…RRTK). Residues 7–26 (KTSTPSTRNGTVDSRQVKSN) are compositionally biased toward polar residues.

Belongs to the universal ribosomal protein uL2 family. Part of the 50S ribosomal subunit.

The protein resides in the plastid. It localises to the chloroplast. The chain is Large ribosomal subunit protein uL2cz/uL2cy (rpl2-A) from Phaseolus angularis (Azuki bean).